Here is a 289-residue protein sequence, read N- to C-terminus: Elongation factor Ts (289 aa).

The involved in Mg(2+) ion dislocation from EF-Tu stretch occupies residues 82-85 (TDFV).

Belongs to the EF-Ts family.

The protein resides in the cytoplasm. Associates with the EF-Tu.GDP complex and induces the exchange of GDP to GTP. It remains bound to the aminoacyl-tRNA.EF-Tu.GTP complex up to the GTP hydrolysis stage on the ribosome. The sequence is that of Elongation factor Ts from Marinobacter nauticus (strain ATCC 700491 / DSM 11845 / VT8) (Marinobacter aquaeolei).